The chain runs to 136 residues: Small ribosomal subunit protein uS12 (136 aa).

Asp89 is modified (3-methylthioaspartic acid). A disordered region spans residues 104 to 136; it reads TAGVNGRTQRRSKYGAKRPKPGQAAAAAKGKKK. Residues 111-123 show a composition bias toward basic residues; it reads TQRRSKYGAKRPK. Residues 124–136 are compositionally biased toward low complexity; the sequence is PGQAAAAAKGKKK.

The protein belongs to the universal ribosomal protein uS12 family. In terms of assembly, part of the 30S ribosomal subunit. Contacts proteins S8 and S17. May interact with IF1 in the 30S initiation complex.

In terms of biological role, with S4 and S5 plays an important role in translational accuracy. Functionally, interacts with and stabilizes bases of the 16S rRNA that are involved in tRNA selection in the A site and with the mRNA backbone. Located at the interface of the 30S and 50S subunits, it traverses the body of the 30S subunit contacting proteins on the other side and probably holding the rRNA structure together. The combined cluster of proteins S8, S12 and S17 appears to hold together the shoulder and platform of the 30S subunit. The polypeptide is Small ribosomal subunit protein uS12 (Parabacteroides distasonis (strain ATCC 8503 / DSM 20701 / CIP 104284 / JCM 5825 / NCTC 11152)).